The sequence spans 211 residues: Ceramide-1-phosphate transfer protein (211 aa).

An N-acylsphingoid base 1-phosphate is bound by residues Asp53, Lys57, Arg103, Arg107, and His147.

This sequence belongs to the GLTP family.

It localises to the cytoplasm. It is found in the cytosol. The protein localises to the golgi apparatus. Its subcellular location is the trans-Golgi network membrane. The protein resides in the cell membrane. It localises to the endosome membrane. It is found in the nucleus outer membrane. The enzyme catalyses N-(hexadecanoyl)-sphing-4-enine-1-phosphate(in) = N-(hexadecanoyl)-sphing-4-enine-1-phosphate(out). It carries out the reaction N-(9Z-octadecenoyl)-sphing-4-enine-1-phosphate(in) = N-(9Z-octadecenoyl)-sphing-4-enine-1-phosphate(out). Functionally, mediates the intracellular transfer of ceramide-1-phosphate (C1P) between organelle membranes and the cell membrane. Required for normal structure of the Golgi stacks. Can bind phosphoceramides with a variety of aliphatic chains, but has a preference for lipids with saturated C16:0 or monounsaturated C18:1 aliphatic chains, and is inefficient with phosphoceramides containing lignoceryl (C24:0). Plays a role in the regulation of the cellular levels of ceramide-1-phosphate, and thereby contributes to the regulation of phospholipase PLA2G4A activity and the release of arachidonic acid. Has no activity with galactosylceramide, lactosylceramide, sphingomyelin, phosphatidylcholine, phosphatidic acid and ceramide. C1P transfer is stimulated by phosphatidylserine in C1P source vesicles. Regulates autophagy and pyroptosis, but not apoptosis. This Danio rerio (Zebrafish) protein is Ceramide-1-phosphate transfer protein (cptp).